The following is a 416-amino-acid chain: Imidazolonepropionase (416 aa).

Fe(3+) contacts are provided by H78 and H80. 2 residues coordinate Zn(2+): H78 and H80. 4-imidazolone-5-propanoate contacts are provided by R87, Y150, and H183. Y150 provides a ligand contact to N-formimidoyl-L-glutamate. Residue H248 coordinates Fe(3+). H248 lines the Zn(2+) pocket. Q251 contributes to the 4-imidazolone-5-propanoate binding site. D323 contributes to the Fe(3+) binding site. D323 lines the Zn(2+) pocket. N-formimidoyl-L-glutamate-binding residues include N325 and G327. T328 contacts 4-imidazolone-5-propanoate.

Belongs to the metallo-dependent hydrolases superfamily. HutI family. It depends on Zn(2+) as a cofactor. The cofactor is Fe(3+).

It is found in the cytoplasm. It carries out the reaction 4-imidazolone-5-propanoate + H2O = N-formimidoyl-L-glutamate. Its pathway is amino-acid degradation; L-histidine degradation into L-glutamate; N-formimidoyl-L-glutamate from L-histidine: step 3/3. Catalyzes the hydrolytic cleavage of the carbon-nitrogen bond in imidazolone-5-propanoate to yield N-formimidoyl-L-glutamate. It is the third step in the universal histidine degradation pathway. This is Imidazolonepropionase from Vibrio campbellii (strain ATCC BAA-1116).